The following is a 155-amino-acid chain: Transcriptional repressor NrdR (155 aa).

Residues 3–34 (CPNCHQNASRVIDSRPTDEGRTIRRRRECENC) fold into a zinc finger. Positions 49-139 (LLVIKNDGTR…IYRQFTDMSS (91 aa)) constitute an ATP-cone domain.

The protein belongs to the NrdR family. It depends on Zn(2+) as a cofactor.

Negatively regulates transcription of bacterial ribonucleotide reductase nrd genes and operons by binding to NrdR-boxes. The chain is Transcriptional repressor NrdR from Lactobacillus delbrueckii subsp. bulgaricus (strain ATCC 11842 / DSM 20081 / BCRC 10696 / JCM 1002 / NBRC 13953 / NCIMB 11778 / NCTC 12712 / WDCM 00102 / Lb 14).